A 331-amino-acid chain; its full sequence is Biotin synthase (331 aa).

Residues 52–277 (PDVEVEGIIS…RTMLRFAGGR (226 aa)) form the Radical SAM core domain. Positions 67, 71, and 74 each coordinate [4Fe-4S] cluster. Residues cysteine 110, cysteine 143, cysteine 202, and arginine 272 each contribute to the [2Fe-2S] cluster site.

The protein belongs to the radical SAM superfamily. Biotin synthase family. As to quaternary structure, homodimer. [4Fe-4S] cluster is required as a cofactor. The cofactor is [2Fe-2S] cluster.

The enzyme catalyses (4R,5S)-dethiobiotin + (sulfur carrier)-SH + 2 reduced [2Fe-2S]-[ferredoxin] + 2 S-adenosyl-L-methionine = (sulfur carrier)-H + biotin + 2 5'-deoxyadenosine + 2 L-methionine + 2 oxidized [2Fe-2S]-[ferredoxin]. It functions in the pathway cofactor biosynthesis; biotin biosynthesis; biotin from 7,8-diaminononanoate: step 2/2. Functionally, catalyzes the conversion of dethiobiotin (DTB) to biotin by the insertion of a sulfur atom into dethiobiotin via a radical-based mechanism. The chain is Biotin synthase from Mycolicibacterium vanbaalenii (strain DSM 7251 / JCM 13017 / BCRC 16820 / KCTC 9966 / NRRL B-24157 / PYR-1) (Mycobacterium vanbaalenii).